The sequence spans 203 residues: 3-isopropylmalate dehydratase small subunit (203 aa).

Belongs to the LeuD family. LeuD type 1 subfamily. Heterodimer of LeuC and LeuD.

The catalysed reaction is (2R,3S)-3-isopropylmalate = (2S)-2-isopropylmalate. The protein operates within amino-acid biosynthesis; L-leucine biosynthesis; L-leucine from 3-methyl-2-oxobutanoate: step 2/4. Functionally, catalyzes the isomerization between 2-isopropylmalate and 3-isopropylmalate, via the formation of 2-isopropylmaleate. The chain is 3-isopropylmalate dehydratase small subunit from Phenylobacterium zucineum (strain HLK1).